The primary structure comprises 195 residues: uncharacterized protein (195 aa).

The segment at 1-35 (MASSSSAALRPFGTARLTPGRQTGRQTQQQISAPE) is disordered. A compositionally biased stretch (low complexity) spans 20–30 (GRQTGRQTQQQ). Residues 76–184 (GVTVIPRVAR…PASINMALEA (109 aa)) enclose the MSP domain.

This is an uncharacterized protein from Caenorhabditis elegans.